The chain runs to 473 residues: NAD-dependent protein deacetylase SRT1 (473 aa).

Residues 27 to 267 (SHLLQCKIEE…AGVMESLNMK (241 aa)) form the Deacetylase sirtuin-type domain. NAD(+) is bound by residues 52–71 (GAGI…KGIW) and 114–117 (QNVD). The Proton acceptor role is filled by His134. Zn(2+)-binding residues include Cys142, Cys145, Cys167, and Cys172. NAD(+) contacts are provided by residues 209-211 (GTS), 235-237 (NLQ), and Val253. Positions 447 to 473 (LEGSGTSRKRSRTGKRKSKALAEETKA) are disordered. The segment covering 453 to 465 (SRKRSRTGKRKSK) has biased composition (basic residues).

It belongs to the sirtuin family. Class IV subfamily. As to quaternary structure, binds to the promoter region of genes influenced by ethylene. Interacts with ENAP1; this interaction is enhanced in the presence of ethylene. It depends on Zn(2+) as a cofactor.

The protein localises to the nucleus. The enzyme catalyses N(6)-acetyl-L-lysyl-[protein] + NAD(+) + H2O = 2''-O-acetyl-ADP-D-ribose + nicotinamide + L-lysyl-[protein]. In terms of biological role, NAD-dependent protein deacetylase. Has deacetylase activity towards H3K9Ac. May have a function in the safeguard against genome instability and DNA damage to ensure plant cell growth. Involved in responses to ethylene leading to the transcriptional repression of some ethylene-responsive genes via the regulation of histone acetylation H3K9Ac. This is NAD-dependent protein deacetylase SRT1 from Arabidopsis thaliana (Mouse-ear cress).